The following is a 446-amino-acid chain: Baeyer-Villiger oxidase mdpL (446 aa).

The protein belongs to the AflY oxidoreductase family. The cofactor is NADPH.

It participates in secondary metabolite biosynthesis. Its function is as follows. Baeyer-Villiger oxidase; part of the gene cluster that mediates the biosynthesis of monodictyphenone, a prenyl xanthone derivative. The pathway begins with the synthesis of atrochrysone thioester by the polyketide synthase (PKS) mdpG. The atrochrysone carboxyl ACP thioesterase mdpF then breaks the thioester bond and releases the atrochrysone carboxylic acid from mdpG. The atrochrysone carboxylic acid is then converted to atrochrysone which is further transformed into emodin anthrone. The next step is performed by the anthrone oxygenase mdpH that catalyzes the oxidation of emodinanthrone to emodin. Emodin is further modified to yield monodictyphenone via several steps involving mdpB, mdpC mdpJ, mdpK and mdpL. These enzymes with xptA, xptB and xptC are also proposed to be involved in the synthesis of shamixanthone from emodin. Especially, direct reduction of emodin by the short chain dehydrogenase mdpC followed by dehydration catalyzed by the scytalone dehydratase-like protein mdpB gives loss of oxygen and formation of chrysophanol intermediate in two simple steps. The sequence is that of Baeyer-Villiger oxidase mdpL from Emericella nidulans (strain FGSC A4 / ATCC 38163 / CBS 112.46 / NRRL 194 / M139) (Aspergillus nidulans).